We begin with the raw amino-acid sequence, 950 residues long: Translation initiation factor IF-2 (950 aa).

4 stretches are compositionally biased toward basic and acidic residues: residues 128-156, 165-186, 200-234, and 291-312; these read KPKVAEPVKKSEPKAAAKAEETKVEKVEA, AEVKTENVADKKEPVVTEEKKK, KRAEDIKKEQAAARPEKKKFDKNRNDRNNRNDNRR, and NRRDRDRKKTDSNRDNTKDGNR. A disordered region spans residues 128–352; the sequence is KPKVAEPVKK…YQNNQSSNVP (225 aa). Polar residues-rich tracts occupy residues 322 to 336 and 343 to 352; these read NRNQVRNARNSNWNQ and YQNNQSSNVP. The tr-type G domain maps to 448-619; that stretch reads ERPAVVTIMG…LLVAEVQELK (172 aa). The G1 stretch occupies residues 457 to 464; sequence GHVDHGKT. GTP is bound at residue 457–464; the sequence is GHVDHGKT. The interval 482–486 is G2; sequence GITQH. The segment at 503–506 is G3; that stretch reads DTPG. Residues 503-507 and 557-560 contribute to the GTP site; these read DTPGH and NKLD. The G4 stretch occupies residues 557–560; the sequence is NKLD. Residues 595-597 form a G5 region; sequence SAK.

This sequence belongs to the TRAFAC class translation factor GTPase superfamily. Classic translation factor GTPase family. IF-2 subfamily.

The protein localises to the cytoplasm. Its function is as follows. One of the essential components for the initiation of protein synthesis. Protects formylmethionyl-tRNA from spontaneous hydrolysis and promotes its binding to the 30S ribosomal subunits. Also involved in the hydrolysis of GTP during the formation of the 70S ribosomal complex. The sequence is that of Translation initiation factor IF-2 (infB) from Lactococcus lactis subsp. cremoris (Streptococcus cremoris).